The primary structure comprises 173 residues: Photosystem I assembly protein Ycf3 (173 aa).

TPR repeat units lie at residues 35-68 (AFVYYRDGMSAQADGEYKEALDNYYEALKLEDDA), 72-105 (SYILYNIGIIHGSNGEHERALEYYHEAIELNPNL), and 120-153 (GERAKEEGREDESEALFDKAAEYWKQAIRLAPNN).

The protein belongs to the Ycf3 family.

The protein localises to the cellular thylakoid membrane. Functionally, essential for the assembly of the photosystem I (PSI) complex. May act as a chaperone-like factor to guide the assembly of the PSI subunits. The polypeptide is Photosystem I assembly protein Ycf3 (Gloeothece citriformis (strain PCC 7424) (Cyanothece sp. (strain PCC 7424))).